Here is a 251-residue protein sequence, read N- to C-terminus: Methylthioribulose-1-phosphate dehydratase (251 aa).

The segment at 1–26 is disordered; it reads MTSVCDATNEDKENGSESTESQDKEH. A compositionally biased stretch (basic and acidic residues) spans 9 to 26; the sequence is NEDKENGSESTESQDKEH. C100 lines the substrate pocket. Zn(2+)-binding residues include H118 and H120. The active-site Proton donor/acceptor is E142. H198 is a Zn(2+) binding site. The disordered stretch occupies residues 232 to 251; that stretch reads MDPSAPPIEENHYYDVQQSQ.

It belongs to the aldolase class II family. MtnB subfamily. The cofactor is Zn(2+).

It is found in the cytoplasm. It catalyses the reaction 5-(methylsulfanyl)-D-ribulose 1-phosphate = 5-methylsulfanyl-2,3-dioxopentyl phosphate + H2O. It participates in amino-acid biosynthesis; L-methionine biosynthesis via salvage pathway; L-methionine from S-methyl-5-thio-alpha-D-ribose 1-phosphate: step 2/6. Catalyzes the dehydration of methylthioribulose-1-phosphate (MTRu-1-P) into 2,3-diketo-5-methylthiopentyl-1-phosphate (DK-MTP-1-P). Functions in the methionine salvage pathway. May play a role in apoptosis. The sequence is that of Methylthioribulose-1-phosphate dehydratase from Salmo salar (Atlantic salmon).